The chain runs to 603 residues: Thread biopolymer filament subunit gamma (603 aa).

The segment at 1-191 is head; sequence MASHSSVSYR…ENETMEEELK (191 aa). Residues 158–476 enclose the IF rod domain; sequence VKNILGTLNQ…KLLEGQELMV (319 aa). Positions 193–227 are coil 1A; that stretch reads LTGGVPMSPDSTVNLENVETQVTEMLTEVSNLTLE. The tract at residues 228–240 is linker 1; it reads RVRLEIDVDHLRA. The tract at residues 241-341 is coil 1B; that stretch reads TADEIKSKYE…DALNVMREEY (101 aa). The tract at residues 342–362 is linker 12; it reads QQVVTKNVQEAETYCKMQIDQ. Residues 363 to 381 are coil 2A; that stretch reads IQGISTQTTEQISILDKEI. Positions 382 to 389 are linker 2; it reads NTLEKELQ. Residues 390-510 are coil 2B; sequence PLNVEYQRLL…SSVGYGASST (121 aa). Residues 511 to 603 form a tail region; the sequence is TLGAISGGYS…GHDSTIILQQ (93 aa). Residues 562 to 587 are compositionally biased toward low complexity; it reads SSSGGHSMYSSSSMKRSSSKSASASA. The segment at 562-603 is disordered; the sequence is SSSGGHSMYSSSSMKRSSSKSASASAGGYGTSGHDSTIILQQ.

Belongs to the intermediate filament family. Coiled-coil heterodimer of an alpha and a gamma subunit. Assemble into 10 nm filaments. Forms a massive, conical, intermediate filament biopolymer of approximately 60 cm.

The protein localises to the secreted. The protein resides in the extracellular space. In terms of biological role, released extracellularly into seawater and provides physical and biological defense against invasive organism by modulation of the viscoelastic properties of mucus. The chain is Thread biopolymer filament subunit gamma from Eptatretus stoutii (Pacific hagfish).